The sequence spans 482 residues: Protein farnesyltransferase subunit beta (482 aa).

PFTB repeat units follow at residues 131 to 172 (ESNA…VTLG), 182 to 223 (REKM…SILN), 230 to 271 (TQGL…ILIN), and 278 to 319 (LDSL…VLLQ). Residues 256 to 259 (HGGY) and 298 to 301 (RTNK) each bind (2E,6E)-farnesyl diphosphate. Zn(2+) contacts are provided by Asp-304 and Cys-306. (2E,6E)-farnesyl diphosphate is bound at residue 307–310 (YTFW). The interval 329-372 (VHGSSHISEGTNEEHHAHDEDDLEDSDDDDDSDEDNDEDSVNGH) is disordered. Residues 348–368 (EDDLEDSDDDDDSDEDNDEDS) are compositionally biased toward acidic residues. Residues 391 to 433 (SLGLQRYVLLCSKIPDGGFRDKPRKPRDFYHTCYCLSGLSVAQ) form a PFTB 5 repeat. His-421 contacts Zn(2+).

This sequence belongs to the protein prenyltransferase subunit beta family. In terms of assembly, heterodimer of FTA and FTB (farnesyltransferase). Heterodimer of an alpha and a beta subunit. It depends on Zn(2+) as a cofactor.

The catalysed reaction is L-cysteinyl-[protein] + (2E,6E)-farnesyl diphosphate = S-(2E,6E)-farnesyl-L-cysteinyl-[protein] + diphosphate. In terms of biological role, catalyzes the transfer of a farnesyl moiety from farnesyl diphosphate to a cysteine at the fourth position from the C-terminus of several proteins having the C-terminal sequence Cys-aliphatic-aliphatic-X (CaaX). The beta subunit is responsible for peptide-binding. Acts as an abscisic acid (ABA) negative regulator by mediating ASG2 farnesylation and consequently monitoring its subcellular localization. Involved in responses to salt (NaCl) and osmotic (e.g. in response to mannitol and PEG) stresses. The sequence is that of Protein farnesyltransferase subunit beta (FTB) from Arabidopsis thaliana (Mouse-ear cress).